A 280-amino-acid chain; its full sequence is 4-deoxy-L-threo-5-hexosulose-uronate ketol-isomerase (280 aa).

Residues H198, H200, E205, and H247 each coordinate Zn(2+).

Belongs to the KduI family. The cofactor is Zn(2+).

The enzyme catalyses 5-dehydro-4-deoxy-D-glucuronate = 3-deoxy-D-glycero-2,5-hexodiulosonate. It functions in the pathway glycan metabolism; pectin degradation; 2-dehydro-3-deoxy-D-gluconate from pectin: step 4/5. Catalyzes the isomerization of 5-dehydro-4-deoxy-D-glucuronate to 3-deoxy-D-glycero-2,5-hexodiulosonate. The chain is 4-deoxy-L-threo-5-hexosulose-uronate ketol-isomerase from Lachnospira eligens (strain ATCC 27750 / DSM 3376 / VPI C15-48 / C15-B4) (Eubacterium eligens).